The chain runs to 75 residues: Defensin-like protein 58 (75 aa).

Positions 1–23 are cleaved as a signal peptide; the sequence is MNITKRYVVIFFLVMLTKSLSNS. Disulfide bonds link Cys-39-Cys-73, Cys-43-Cys-66, Cys-52-Cys-71, and Cys-56-Cys-72.

The protein belongs to the DEFL family.

It localises to the secreted. The chain is Defensin-like protein 58 from Arabidopsis thaliana (Mouse-ear cress).